The primary structure comprises 37 residues: Large ribosomal subunit protein bL36 (37 aa).

Belongs to the bacterial ribosomal protein bL36 family.

This Nitratiruptor sp. (strain SB155-2) protein is Large ribosomal subunit protein bL36.